Here is a 302-residue protein sequence, read N- to C-terminus: Putative receptor-like protein 16 (302 aa).

LRR repeat units follow at residues 1 to 19 (MNLT…LGNM), 20 to 43 (EMIE…FLKG), and 45 to 70 (DSLI…NFFS). An LRR 4; degenerate repeat occupies 72 to 91 (LELSMDNNLFTGKIGRGLQS). 7 LRR repeats span residues 92–115 (LRSL…WFDQ), 116–140 (LQDL…LFNM), 142–164 (SLQL…ISGY), 166–188 (ALKV…LLGK), 190–211 (IIVL…INTQ), 213–234 (IRIL…LCAV), and 235–258 (RSIH…LRNA).

Belongs to the RLP family.

The protein is Putative receptor-like protein 16 of Arabidopsis thaliana (Mouse-ear cress).